Reading from the N-terminus, the 458-residue chain is O-acyltransferase WSD (458 aa).

The active-site Proton acceptor is the His-133.

The protein belongs to the long-chain O-acyltransferase family.

It catalyses the reaction a long chain fatty alcohol + a fatty acyl-CoA = a wax ester + CoA. It carries out the reaction an acyl-CoA + a 1,2-diacyl-sn-glycerol = a triacyl-sn-glycerol + CoA. It functions in the pathway glycerolipid metabolism; triacylglycerol biosynthesis. Bifunctional wax ester synthase/diacylglycerol acyltransferase (WS and DGAT). Catalyzes the terminal and only committed step in triacylglycerol synthesis by using diacylglycerol and fatty acyl CoA as substrates. Required for storage lipid synthesis. WS uses C(12)-CoA to C(18)-CoA substrates whereas DGAT prefers C(20)-CoA. Upon expression in E.coli and Pseudomonas citronellolis (DSM 50332) both WS and DGAT activities increase. This is O-acyltransferase WSD (wax-dgaT) from Acinetobacter baylyi (strain ATCC 33305 / BD413 / ADP1).